The sequence spans 99 residues: Cell division topological specificity factor (99 aa).

The protein belongs to the MinE family.

Prevents the cell division inhibition by proteins MinC and MinD at internal division sites while permitting inhibition at polar sites. This ensures cell division at the proper site by restricting the formation of a division septum at the midpoint of the long axis of the cell. This Tolumonas auensis (strain DSM 9187 / NBRC 110442 / TA 4) protein is Cell division topological specificity factor.